The following is a 577-amino-acid chain: Aspartate--tRNA ligase (577 aa).

E171 contributes to the L-aspartate binding site. Residues 195 to 198 form an aspartate region; sequence QLFK. L-aspartate is bound at residue R217. ATP contacts are provided by residues 217-219 and Q226; that span reads RDE. L-aspartate is bound at residue H437. An ATP-binding site is contributed by E472. R479 contacts L-aspartate. 524-527 lines the ATP pocket; it reads GFDR.

This sequence belongs to the class-II aminoacyl-tRNA synthetase family. Type 1 subfamily. In terms of assembly, homodimer.

The protein resides in the cytoplasm. It catalyses the reaction tRNA(Asp) + L-aspartate + ATP = L-aspartyl-tRNA(Asp) + AMP + diphosphate. In terms of biological role, catalyzes the attachment of L-aspartate to tRNA(Asp) in a two-step reaction: L-aspartate is first activated by ATP to form Asp-AMP and then transferred to the acceptor end of tRNA(Asp). The sequence is that of Aspartate--tRNA ligase from Deinococcus geothermalis (strain DSM 11300 / CIP 105573 / AG-3a).